The chain runs to 554 residues: (E)-nerolidol synthase TPS18VF (554 aa).

Arg-276, Asp-313, Asp-317, Arg-455, and Asp-458 together coordinate (2E,6E)-farnesyl diphosphate. Mg(2+) contacts are provided by Asp-313 and Asp-317. Positions 313-317 (DDIFD) match the DDXXD motif motif. Mg(2+) contacts are provided by Asp-458, Ser-462, and Glu-466.

Belongs to the terpene synthase family. Tpsb subfamily. The cofactor is Mg(2+). It depends on Mn(2+) as a cofactor. Highly expressed in glandular trichomes.

It catalyses the reaction (2E,6E)-farnesyl diphosphate + H2O = (6E)-nerolidol + diphosphate. The catalysed reaction is (2E)-geranyl diphosphate + H2O = (R)-linalool + diphosphate. The enzyme catalyses (2E)-geranyl diphosphate + H2O = (S)-linalool + diphosphate. It participates in secondary metabolite biosynthesis; terpenoid biosynthesis. Functionally, involved in sesquiterpene olefins biosynthesis, constituants of cannabinoids and terpenoids-rich resins. Catalyzes primarily the conversion of (2E)-farnesyl diphosphate to (E)-nerolidol, and the conversion of (2E)-geranyl diphosphate to (+)linalool and (-)linalool. This Cannabis sativa (Hemp) protein is (E)-nerolidol synthase TPS18VF.